The following is a 345-amino-acid chain: tRNA-dihydrouridine(20/20a) synthase (345 aa).

Residues 32 to 34 (PML) and Q84 each bind FMN. The active-site Proton donor is the C114. Residues K153, H186, 226-228 (NGG), and 248-249 (GR) contribute to the FMN site.

Belongs to the Dus family. DusA subfamily. FMN is required as a cofactor.

The catalysed reaction is 5,6-dihydrouridine(20) in tRNA + NADP(+) = uridine(20) in tRNA + NADPH + H(+). It catalyses the reaction 5,6-dihydrouridine(20) in tRNA + NAD(+) = uridine(20) in tRNA + NADH + H(+). It carries out the reaction 5,6-dihydrouridine(20a) in tRNA + NADP(+) = uridine(20a) in tRNA + NADPH + H(+). The enzyme catalyses 5,6-dihydrouridine(20a) in tRNA + NAD(+) = uridine(20a) in tRNA + NADH + H(+). Catalyzes the synthesis of 5,6-dihydrouridine (D), a modified base found in the D-loop of most tRNAs, via the reduction of the C5-C6 double bond in target uridines. Specifically modifies U20 and U20a in tRNAs. The protein is tRNA-dihydrouridine(20/20a) synthase of Escherichia coli O157:H7.